The primary structure comprises 289 residues: Elongation factor Ts (289 aa).

Residues Thr82–Leu85 form an involved in Mg(2+) ion dislocation from EF-Tu region.

It belongs to the EF-Ts family.

It localises to the cytoplasm. Functionally, associates with the EF-Tu.GDP complex and induces the exchange of GDP to GTP. It remains bound to the aminoacyl-tRNA.EF-Tu.GTP complex up to the GTP hydrolysis stage on the ribosome. The polypeptide is Elongation factor Ts (Pseudomonas aeruginosa (strain LESB58)).